The chain runs to 1003 residues: PHD finger protein 12 (1003 aa).

Residues 29 to 59 (APPKTDEAEKRSRKPEKESRRSGRATNHDSC) form a disordered region. Residues 32 to 59 (KTDEAEKRSRKPEKESRRSGRATNHDSC) are compositionally biased toward basic and acidic residues. The PHD-type 1 zinc-finger motif lies at 56-105 (HDSCDSCKEGGDLLCCDHCPAAFHLQCCNPPLSEEMLPPGEWMCHRCTVR). The Zn(2+) site is built by cysteine 59, serine 61, cysteine 62, histidine 79, and cysteine 82. 2 disordered regions span residues 110–183 (EQKK…HNDV) and 234–255 (TTALPGSSKRRRKEETTGKNVK). 2 positions are modified to phosphoserine: serine 131 and serine 134. Residues 138–161 (LLDRPASKTELKAIAHARILERRA) are compositionally biased toward basic and acidic residues. Residues 165–178 (GTPTSNASTETPTS) show a composition bias toward polar residues. The SIN3 interacting domain 1 stretch occupies residues 202 to 241 (VQPQLRRPFELLIAAAMERNPTQFQLPNELTCTTALPGSS). Residues 271–321 (VKVCFTCNRSCRVAPLIQCDYCPLLFHMDCLEPPLTAMPLGRWMCPNHIEH) form a PHD-type 2; atypical zinc finger. Positions 274, 277, 289, 292, 297, 300, 315, and 318 each coordinate Zn(2+). Residues 328-364 (NLTLSNRCQVFDRFQDTISQHVVKVDFLNRIHKKHPP) are SIN3 interacting domain 2. Lysine 467 participates in a covalent cross-link: Glycyl lysine isopeptide (Lys-Gly) (interchain with G-Cter in SUMO2). Disordered stretches follow at residues 531-583 (KAPC…GWPR) and 641-671 (HRKTVQSQIGPSSTESRPLGSPPNATRVLTP). Serine 555 is subject to Phosphoserine. 2 positions are modified to phosphothreonine: threonine 557 and threonine 570. Residues 641–656 (HRKTVQSQIGPSSTES) show a composition bias toward polar residues. At threonine 670 the chain carries Phosphothreonine. In terms of domain architecture, FHA spans 814 to 868 (LYIGTGADMDVCLTNYGHCNYVSGKHACIFYDENTKHYELLNYSEHGTTVDNVLY). The tract at residues 894–922 (RRRHQKQDEEPSEEAAMMSSQAQGPQRRP) is disordered. Lysine 899 participates in a covalent cross-link: Glycyl lysine isopeptide (Lys-Gly) (interchain with G-Cter in SUMO2). Residues 907-916 (EAAMMSSQAQ) are compositionally biased toward low complexity. Glycyl lysine isopeptide (Lys-Gly) (interchain with G-Cter in SUMO2) cross-links involve residues lysine 972, lysine 986, and lysine 990.

As to quaternary structure, component of SIN3 complexes. Interacts with SIN3A in a complex composed of HDAC1, SAP30 and SIN3A. Component of the SIN3B complex, which includes SIN3B, HDAC2 or HDAC1, PHF12 and MORF4L1; interacts directly with all subunits. Interacts with TLE5. Expressed mainly in heart, brain, lung, liver and testis.

Its subcellular location is the nucleus. Transcriptional repressor acting as key scaffolding subunit of SIN3 complexes which contributes to complex assembly by contacting each core subunit domain, stabilizes the complex and constitutes the substrate receptor by recruiting the H3 histone tail. SIN3 complexes are composed of a SIN3 scaffold subunit, one catalytic core (HDAC1 or HDAC2) and 2 chromatin targeting modules. SIN3B complex represses transcription and counteracts the histone acetyltransferase activity of EP300 through the recognition H3K27ac marks by PHF12 and the activity of the histone deacetylase HDAC2. SIN3B complex is recruited downstream of the constitutively active genes transcriptional start sites through interaction with histones and mitigates histone acetylation and RNA polymerase II progression within transcribed regions contributing to the regulation of transcription. May also repress transcription in a SIN3A-independent manner through recruitment of functional TLE5 complexes to DNA. May also play a role in ribosomal biogenesis. This is PHD finger protein 12 from Mus musculus (Mouse).